Reading from the N-terminus, the 796-residue chain is Probable phosphoketolase (796 aa).

This sequence belongs to the XFP family. Requires thiamine diphosphate as cofactor.

The chain is Probable phosphoketolase from Clostridium acetobutylicum (strain ATCC 824 / DSM 792 / JCM 1419 / IAM 19013 / LMG 5710 / NBRC 13948 / NRRL B-527 / VKM B-1787 / 2291 / W).